A 341-amino-acid chain; its full sequence is KRR1 small subunit processome component homolog (341 aa).

A KH domain is found at 126–194; it reads DIIKIGNLVH…VRDIVLETMN (69 aa). The segment covering 230-244 has biased composition (basic residues); the sequence is KNKNISKRKQPKSRK. The interval 230 to 327 is disordered; that stretch reads KNKNISKRKQ…RPSEASKVDV (98 aa). Residues 271–341 adopt a coiled-coil conformation; the sequence is FLNKEQKQAK…AKLLKANKQK (71 aa). 2 stretches are compositionally biased toward basic and acidic residues: residues 272 to 303 and 313 to 327; these read LNKE…RNKD and EQNR…KVDV.

It belongs to the KRR1 family. Monomer. Component of the ribosomal small subunit (SSU) processome.

The protein localises to the nucleus. The protein resides in the nucleolus. Functionally, required for 40S ribosome biogenesis. Involved in nucleolar processing of pre-18S ribosomal RNA and ribosome assembly. Binds to RNA. Required for female germline development, cell viability during eye development and for survival of dividing cells and epithelial cells during early wing disk development. This Drosophila grimshawi (Hawaiian fruit fly) protein is KRR1 small subunit processome component homolog.